The sequence spans 470 residues: Poly(A) polymerase catalytic subunit (470 aa).

Residues Asp-192 and Asp-194 contribute to the active site.

Belongs to the poxviridae poly(A) polymerase catalytic subunit family. Heterodimer of a large (catalytic) subunit and a small (regulatory) subunit.

It carries out the reaction RNA(n) + ATP = RNA(n)-3'-adenine ribonucleotide + diphosphate. Polymerase that creates the 3'-poly(A) tail of mRNA's. This Molluscum contagiosum virus subtype 1 (MOCV) protein is Poly(A) polymerase catalytic subunit (PAPL).